Consider the following 87-residue polypeptide: Exodeoxyribonuclease 7 small subunit (87 aa).

It belongs to the XseB family. As to quaternary structure, heterooligomer composed of large and small subunits.

The protein resides in the cytoplasm. It carries out the reaction Exonucleolytic cleavage in either 5'- to 3'- or 3'- to 5'-direction to yield nucleoside 5'-phosphates.. In terms of biological role, bidirectionally degrades single-stranded DNA into large acid-insoluble oligonucleotides, which are then degraded further into small acid-soluble oligonucleotides. This Serratia proteamaculans (strain 568) protein is Exodeoxyribonuclease 7 small subunit.